The chain runs to 47 residues: Type II secretion system protein N (47 aa).

This sequence belongs to the GSP N family.

The protein localises to the cell inner membrane. In terms of biological role, involved in a type II secretion system (T2SS, formerly general secretion pathway, GSP) for the export of proteins. This chain is Type II secretion system protein N (exeN), found in Aeromonas salmonicida.